The following is an 887-amino-acid chain: Semaphorin-6B (887 aa).

Residues 1–26 (MWTPRAPPPRPALLFLLLLLLRVTHG) form the signal peptide. At 27 to 605 (LFPDEPPPLS…VSVNLLVTSS (579 aa)) the chain is on the extracellular side. Residues 32–525 (PPPLSVAPRD…FPRCVVRVPV (494 aa)) form the Sema domain. Residue Asn75 is glycosylated (N-linked (GlcNAc...) asparagine). 2 cysteine pairs are disulfide-bonded: Cys117–Cys127 and Cys145–Cys154. Residues Asn156, Asn168, and Asn292 are each glycosylated (N-linked (GlcNAc...) asparagine). 2 disulfides stabilise this stretch: Cys268–Cys379 and Cys293–Cys338. Residues Asn387, Asn442, and Asn463 are each glycosylated (N-linked (GlcNAc...) asparagine). 4 disulfides stabilise this stretch: Cys487/Cys519, Cys528/Cys546, Cys534/Cys580, and Cys538/Cys554. The helical transmembrane segment at 606-626 (VAAFVVGAVVSGFSVGWFVGL) threads the bilayer. Over 627-887 (RERRELARRK…TGERTAPPVP (261 aa)) the chain is Cytoplasmic. 3 disordered regions span residues 656–675 (LGERRGTGTGGRGGAGGGPG), 697–717 (HGGPHDLDSGLLPTPEQTPLP), and 759–887 (APEQ…PPVP). The span at 662–674 (TGTGGRGGAGGGP) shows a compositional bias: gly residues. Arg667 is modified (omega-N-methylarginine). Positions 707–717 (LLPTPEQTPLP) are enriched in low complexity.

It belongs to the semaphorin family.

It is found in the cell membrane. Its function is as follows. Functions as a cell surface repellent for mossy fibers of developing neurons in the hippocampus where it plays a role in axon guidance. May function through the PLXNA4 receptor expressed by mossy cell axons. The chain is Semaphorin-6B (Sema6b) from Rattus norvegicus (Rat).